The following is a 453-amino-acid chain: Zinc finger protein Pegasus (453 aa).

3 consecutive C2H2-type zinc fingers follow at residues 101–123 (LKCR…IRIH), 129–151 (HRCH…MRSH), and 157–180 (YKCE…RRKH). Over residues 279–293 (GQLSSLPPDTQNPAS) the composition is skewed to polar residues. The segment at 279 to 375 (GQLSSLPPDT…QPSTPAPALP (97 aa)) is disordered. A compositionally biased stretch (low complexity) spans 315–332 (CSSAVSTSVAQSSSPASP). The span at 356 to 368 (RTSTPSISNSQPS) shows a compositional bias: polar residues. 2 consecutive C2H2-type zinc fingers follow at residues 383–405 (HHCQ…MGCH) and 411–438 (FQCN…CCQH).

This sequence belongs to the Ikaros C2H2-type zinc-finger protein family. As to quaternary structure, probably self-associates.

It is found in the nucleus. In terms of biological role, transcriptional repressor that binds the core 5'GNNTGTNG-3' DNA consensus sequence. The chain is Zinc finger protein Pegasus (ikzf5) from Xenopus laevis (African clawed frog).